Consider the following 680-residue polypeptide: Fermitin family homolog 2 (680 aa).

Residues His40–Lys81 form an interaction with membranes containing phosphatidylinositol phosphate region. The segment at Leu141 to Glu165 is disordered. Residues Ser159, Ser181, Ser339, and Ser351 each carry the phosphoserine modification. The FERM domain occupies Met189–Lys661. Positions Lys380 to Lys476 constitute a PH domain. An a 1,2-diacyl-sn-glycero-3-phospho-(1D-myo-inositol-3,4,5-trisphosphate)-binding site is contributed by Lys383. Ser666 is subject to Phosphoserine.

Belongs to the kindlin family. In terms of assembly, interacts with ILK. Interacts with FBLIM1. Interacts with ITGB1 and ITGB3. Interacts with active, unphosphorylated CTNNB1. Identified in a complex with CTNNB1 and TCF7L2/TCF4. Interacts with ITGB1; the interaction is inhibited in presence of ITGB1BP1. Ubiquitous. Found in numerous tumor tissues.

The protein resides in the cytoplasm. The protein localises to the cell cortex. It is found in the cytoskeleton. Its subcellular location is the stress fiber. It localises to the cell junction. The protein resides in the focal adhesion. The protein localises to the membrane. It is found in the cell projection. Its subcellular location is the lamellipodium membrane. It localises to the nucleus. The protein resides in the myofibril. The protein localises to the sarcomere. It is found in the i band. Its subcellular location is the cell surface. Functionally, scaffolding protein that enhances integrin activation mediated by TLN1 and/or TLN2, but activates integrins only weakly by itself. Binds to membranes enriched in phosphoinositides. Enhances integrin-mediated cell adhesion onto the extracellular matrix and cell spreading; this requires both its ability to interact with integrins and with phospholipid membranes. Required for the assembly of focal adhesions. Participates in the connection between extracellular matrix adhesion sites and the actin cytoskeleton and also in the orchestration of actin assembly and cell shape modulation. Recruits FBLIM1 to focal adhesions. Plays a role in the TGFB1 and integrin signaling pathways. Stabilizes active CTNNB1 and plays a role in the regulation of transcription mediated by CTNNB1 and TCF7L2/TCF4 and in Wnt signaling. In Homo sapiens (Human), this protein is Fermitin family homolog 2 (FERMT2).